The primary structure comprises 62 residues: Large ribosomal subunit protein eL24 (62 aa).

4 residues coordinate Zn(2+): Cys-6, Cys-9, Cys-32, and Cys-36. Residues 6 to 36 (CSFCEGKIEPGCGKKYVKKDGSVMQFCSSKC) form a C4-type zinc finger.

This sequence belongs to the eukaryotic ribosomal protein eL24 family. Part of the 50S ribosomal subunit. Forms a cluster with proteins L3 and L14. Zn(2+) is required as a cofactor.

Binds to the 23S rRNA. In Methanococcus vannielii (strain ATCC 35089 / DSM 1224 / JCM 13029 / OCM 148 / SB), this protein is Large ribosomal subunit protein eL24.